The following is a 334-amino-acid chain: Flotillin-like protein FloA (334 aa).

The chain crosses the membrane as a helical span at residues 3–23; the sequence is LYLIFLIVVGVVGLVLVGLFL.

It belongs to the flotillin-like FloA family. Homooligomerizes.

It localises to the cell membrane. The protein resides in the membrane raft. Its function is as follows. Found in functional membrane microdomains (FMM) that may be equivalent to eukaryotic membrane rafts. FMMs are highly dynamic and increase in number as cells age. Flotillins are thought to be important factors in membrane fluidity. This Opitutus terrae (strain DSM 11246 / JCM 15787 / PB90-1) protein is Flotillin-like protein FloA.